The sequence spans 396 residues: Argininosuccinate synthase (396 aa).

Position 6-14 (6-14 (AYSGGLDTS)) interacts with ATP. An L-citrulline-binding site is contributed by tyrosine 83. Glycine 113 lines the ATP pocket. Positions 115, 119, and 120 each coordinate L-aspartate. An L-citrulline-binding site is contributed by asparagine 119. 5 residues coordinate L-citrulline: arginine 123, serine 171, serine 180, glutamate 256, and tyrosine 268.

It belongs to the argininosuccinate synthase family. Type 1 subfamily. In terms of assembly, homotetramer.

The protein resides in the cytoplasm. The catalysed reaction is L-citrulline + L-aspartate + ATP = 2-(N(omega)-L-arginino)succinate + AMP + diphosphate + H(+). The protein operates within amino-acid biosynthesis; L-arginine biosynthesis; L-arginine from L-ornithine and carbamoyl phosphate: step 2/3. The protein is Argininosuccinate synthase of Hyperthermus butylicus (strain DSM 5456 / JCM 9403 / PLM1-5).